Reading from the N-terminus, the 292-residue chain is Coiled-coil domain-containing protein 137 (292 aa).

The segment covering 1 to 16 (MAGLRRGAAAVAPAGT) has biased composition (low complexity). Disordered stretches follow at residues 1-94 (MAGL…AQAA), 139-183 (FLSK…EKAA), 205-243 (PELT…LTTS), and 263-292 (ALKR…EMQL). 3 stretches are compositionally biased toward basic and acidic residues: residues 57–78 (KNQD…RQEM), 155–164 (PKKEKSERKK), and 173–183 (KARQRREEKAA). Positions 156-194 (KKEKSERKKAFQKRRLDKARQRREEKAAERLEQELLQDT) form a coiled coil. Positions 222 to 232 (KKSLMLKKLLS) are enriched in low complexity. Residue Ser232 is modified to Phosphoserine. Residues 234–243 (GSVSQPLTTS) show a composition bias toward polar residues. The stretch at 247-276 (QRIVAEERERAVNAYRALKRLQQQRQETQS) forms a coiled coil.

The protein localises to the chromosome. The polypeptide is Coiled-coil domain-containing protein 137 (CCDC137) (Bos taurus (Bovine)).